The sequence spans 671 residues: APC membrane recruitment protein 2 (671 aa).

Disordered stretches follow at residues 1–24 (METS…ASVG), 76–358 (SGGT…SDPS), 391–414 (EAGP…KNPG), and 444–598 (SQTE…PLRT). Gly residues-rich tracts occupy residues 7-21 (RGGG…GAGA) and 126-137 (GGDSGGGGGGRP). Serine 162 bears the Phosphoserine mark. Basic and acidic residues predominate over residues 171–182 (GRSENGKGEPVD). Serine 229 and serine 233 each carry phosphoserine. 3 stretches are compositionally biased toward basic and acidic residues: residues 236–260 (CVKE…RDPA), 276–286 (APARSCREAEG), and 295–307 (ARGE…RRAE). Positions 342–353 (APAAPDPASVDP) are enriched in low complexity. Phosphoserine occurs at positions 355 and 358. Residues 447–458 (EEQGPEPQEGAA) show a composition bias toward low complexity. Basic and acidic residues-rich tracts occupy residues 472 to 487 (TPKD…DASS) and 498 to 514 (IEPH…KEQQ).

The protein belongs to the Amer family. Interacts with APC.

The protein resides in the cell membrane. Negative regulator of the canonical Wnt signaling pathway involved in neuroectodermal patterning. Acts by specifically binding phosphatidylinositol 4,5-bisphosphate (PtdIns(4,5)P2), translocating to the cell membrane and interacting with key regulators of the canonical Wnt signaling pathway, such as components of the beta-catenin destruction complex. The protein is APC membrane recruitment protein 2 (AMER2) of Homo sapiens (Human).